The primary structure comprises 498 residues: ATP synthase subunit beta, chloroplastic (498 aa).

172-179 (GGAGVGKT) serves as a coordination point for ATP.

It belongs to the ATPase alpha/beta chains family. F-type ATPases have 2 components, CF(1) - the catalytic core - and CF(0) - the membrane proton channel. CF(1) has five subunits: alpha(3), beta(3), gamma(1), delta(1), epsilon(1). CF(0) has four main subunits: a(1), b(1), b'(1) and c(9-12).

The protein resides in the plastid. The protein localises to the chloroplast thylakoid membrane. It carries out the reaction ATP + H2O + 4 H(+)(in) = ADP + phosphate + 5 H(+)(out). Its function is as follows. Produces ATP from ADP in the presence of a proton gradient across the membrane. The catalytic sites are hosted primarily by the beta subunits. This is ATP synthase subunit beta, chloroplastic from Nymphaea odorata (White water lily).